A 262-amino-acid chain; its full sequence is MWITQEITPYLRKEYTIEAKLLDVRSEHNILEIFKSKDFGEIAMLNRQLLFKNFLHIESELLAHMGGCTKKELKEVLIVDGFDLELAHQLFKYDTHIDFVQADEKILDSFISFFPHFHEVKNNKNFTHAKQLLDLDIKKYDLIFCLQEPDIHRIDGLKRMLKEDGVFISVAKHPLLEHVSMQNALKNMGGVFSVAMPFVAPLRILSNKGYIYASFKTHPLKDLMTPKIEALTSVRYYNEDIHRAAFALPKNLQEVFKDNIKS.

A PABS domain is found at 1–249 (MWITQEITPY…DIHRAAFALP (249 aa)). Asn-29 contributes to the S-methyl-5'-thioadenosine binding site. Position 83 (Asp-83) interacts with spermidine. Catalysis depends on Asp-155, which acts as the Proton acceptor.

In terms of assembly, homodimer.

The protein resides in the cytoplasm. It catalyses the reaction S-adenosyl 3-(methylsulfanyl)propylamine + putrescine = S-methyl-5'-thioadenosine + spermidine + H(+). It functions in the pathway amine and polyamine biosynthesis; spermidine biosynthesis; spermidine from putrescine: step 1/1. Inhibited by methylglyoxal bis(cyclopentylamidinohydrazone)(MGBCP). Functionally, involved in the cell growth and proliferation. Catalyzes the irreversible transfer of a propylamine group from the amino donor S-adenosylmethioninamine (decarboxy-AdoMet) to putrescine (1,4-diaminobutane) to yield spermidine. Spermidine cannot be used as an aminopropyl acceptor. This chain is Polyamine aminopropyltransferase, found in Helicobacter pylori (strain ATCC 700392 / 26695) (Campylobacter pylori).